A 132-amino-acid polypeptide reads, in one-letter code: Arginine decarboxylase proenzyme (132 aa).

Residue S70 is the Schiff-base intermediate with substrate; via pyruvic acid of the active site. S70 bears the Pyruvic acid (Ser); by autocatalysis mark. H75 acts as the Proton acceptor; for processing activity in catalysis. C90 (proton donor; for catalytic activity) is an active-site residue.

The protein belongs to the prokaryotic AdoMetDC family. Type 1 subfamily. Heterooctamer of four alpha and four beta chains arranged as a tetramer of alpha/beta heterodimers. It depends on pyruvate as a cofactor. Is synthesized initially as an inactive proenzyme. Formation of the active enzyme involves a self-maturation process in which the active site pyruvoyl group is generated from an internal serine residue via an autocatalytic post-translational modification. Two non-identical subunits are generated from the proenzyme in this reaction, and the pyruvate is formed at the N-terminus of the alpha chain, which is derived from the carboxyl end of the proenzyme. The post-translation cleavage follows an unusual pathway, termed non-hydrolytic serinolysis, in which the side chain hydroxyl group of the serine supplies its oxygen atom to form the C-terminus of the beta chain, while the remainder of the serine residue undergoes an oxidative deamination to produce ammonia and the pyruvoyl group blocking the N-terminus of the alpha chain.

The enzyme catalyses L-arginine + H(+) = agmatine + CO2. It participates in amine and polyamine biosynthesis; agmatine biosynthesis; agmatine from L-arginine: step 1/1. Specifically catalyzes the decarboxylation of L-arginine to agmatine. Has no S-adenosylmethionine decarboxylase (AdoMetDC) activity. The protein is Arginine decarboxylase proenzyme of Aeropyrum pernix (strain ATCC 700893 / DSM 11879 / JCM 9820 / NBRC 100138 / K1).